The primary structure comprises 126 residues: Lymphocyte antigen 6E (126 aa).

Positions 1–20 (MKAFLFAVLAAVLCVERAHT) are cleaved as a signal peptide. A UPAR/Ly6 domain is found at 21 to 98 (LICFSCSDAS…CCDSFLCNIS (78 aa)). Cystine bridges form between C23–C48, C26–C35, C41–C69, C73–C89, and C90–C95. Residue N96 is glycosylated (N-linked (GlcNAc...) asparagine). Residue S98 is the site of GPI-anchor amidated serine attachment. The propeptide at 99–126 (GSSSVKASYAVLALGILVSFVYVLRARE) is removed in mature form.

In terms of tissue distribution, expressed by thymic blast cells.

It localises to the cell membrane. The polypeptide is Lymphocyte antigen 6E (LY6E) (Gallus gallus (Chicken)).